The sequence spans 278 residues: Putative transposase for insertion sequence element IS986/IS6110 (278 aa).

The 168-residue stretch at 101–268 (GPPAPNRLWV…VPPVELEAAY (168 aa)) folds into the Integrase catalytic domain.

In terms of biological role, involved in the transposition of the insertion sequence. The protein is Putative transposase for insertion sequence element IS986/IS6110 of Mycobacterium bovis (strain ATCC BAA-935 / AF2122/97).